Reading from the N-terminus, the 528-residue chain is tRNA pseudouridine synthase 1 (528 aa).

The tract at residues 1-59 is disordered; it reads MPSDASTGYVDDQPGDEAYKRGALYKQTKARRADYDSDKEAKRPCTEDSDVALAGTSEE. Residues 31-46 show a composition bias toward basic and acidic residues; that stretch reads RRADYDSDKEAKRPCT. Catalysis depends on D126, which acts as the Nucleophile. Composition is skewed to polar residues over residues 486-495 and 506-528; these read SSSPQENASP and GDNTISAEQPKTATEVPTTQSDA. Residues 486–528 are disordered; that stretch reads SSSPQENASPEAQKAPETPAGDNTISAEQPKTATEVPTTQSDA.

Belongs to the tRNA pseudouridine synthase TruA family. Requires Zn(2+) as cofactor.

It is found in the nucleus. It catalyses the reaction a uridine in tRNA = a pseudouridine in tRNA. It carries out the reaction uridine in snRNA = pseudouridine in snRNA. The enzyme catalyses a uridine in mRNA = a pseudouridine in mRNA. Its function is as follows. Formation of pseudouridine at positions 27 and 28 in the anticodon stem and loop of transfer RNAs; at positions 34 and 36 of intron-containing precursor tRNA(Ile) and at position 35 in the intron-containing tRNA(Tyr). Catalyzes pseudouridylation at position 44 in U2 snRNA. Also catalyzes pseudouridylation of mRNAs. This chain is tRNA pseudouridine synthase 1 (PUS1), found in Eremothecium gossypii (strain ATCC 10895 / CBS 109.51 / FGSC 9923 / NRRL Y-1056) (Yeast).